A 133-amino-acid chain; its full sequence is UPF0102 protein AB57_1130 (133 aa).

This sequence belongs to the UPF0102 family.

The polypeptide is UPF0102 protein AB57_1130 (Acinetobacter baumannii (strain AB0057)).